The sequence spans 159 residues: Cyclic pyranopterin monophosphate synthase (159 aa).

Substrate-binding positions include 75 to 77 (LCH) and 113 to 114 (ME). Asp-128 is a catalytic residue.

This sequence belongs to the MoaC family. As to quaternary structure, homohexamer; trimer of dimers.

The enzyme catalyses (8S)-3',8-cyclo-7,8-dihydroguanosine 5'-triphosphate = cyclic pyranopterin phosphate + diphosphate. The protein operates within cofactor biosynthesis; molybdopterin biosynthesis. Its function is as follows. Catalyzes the conversion of (8S)-3',8-cyclo-7,8-dihydroguanosine 5'-triphosphate to cyclic pyranopterin monophosphate (cPMP). The sequence is that of Cyclic pyranopterin monophosphate synthase from Aliivibrio salmonicida (strain LFI1238) (Vibrio salmonicida (strain LFI1238)).